The following is a 129-amino-acid chain: Protein UL131A (129 aa).

The signal sequence occupies residues 1–18 (MRLCRVWLSVCLCAVVLG).

Forms the envelope pentamer complex (PC) composed of gH, gL, UL128, UL130, and UL131A. The pentamer interacts with host NRP2. The interaction with gH is important for the formation of UL128, UL130, gH-gL complex.

Its subcellular location is the virion membrane. In terms of biological role, plays a role in viral entry into host cells. Forms a pentameric complex at the surface of the viral envelope together with gH, gL, UL130 and UL131. This complex is required for entry in epithelial, endothelial and myeloid host cells. Mechanistically, engages host receptor(s) including neurophilin 2/NRP2 to mediate infection. Contributes to the formation of the complex between UL128, UL130 and gH-gL. The protein is Protein UL131A (UL131A) of Human cytomegalovirus (strain Merlin) (HHV-5).